A 248-amino-acid chain; its full sequence is Adenylate kinase (248 aa).

37–42 lines the ATP pocket; that stretch reads GAGKGT. Residues 57–86 form an NMP region; it reads SPGNLLREEMNRNSPITAQIKDYVSKGQLV. AMP is bound by residues Arg-63, 84-86, 111-114, and Gln-118; these read QLV and GFPR. An LID region spans residues 149–181; sequence GRRFDPITGNTYHIIYDPPPPDIADRVVVRTDD. Arg-150 provides a ligand contact to ATP. Residues Arg-178 and Arg-189 each contribute to the AMP site.

It belongs to the adenylate kinase family. Monomer.

The protein resides in the cytoplasm. The enzyme catalyses AMP + ATP = 2 ADP. Functionally, catalyzes the reversible transfer of the terminal phosphate group between ATP and AMP. Plays an important role in cellular energy homeostasis and in adenine nucleotide metabolism. This Giardia intestinalis (Giardia lamblia) protein is Adenylate kinase.